The chain runs to 147 residues: Small ribosomal subunit protein uS12 (147 aa).

The segment at 1 to 22 is disordered; that stretch reads MPTINQLVRKPRKSKIEKSDSP. The residue at position 102 (Asp102) is a 3-methylthioaspartic acid.

Belongs to the universal ribosomal protein uS12 family. In terms of assembly, part of the 30S ribosomal subunit. Contacts proteins S8 and S17. May interact with IF1 in the 30S initiation complex.

Its function is as follows. With S4 and S5 plays an important role in translational accuracy. Functionally, interacts with and stabilizes bases of the 16S rRNA that are involved in tRNA selection in the A site and with the mRNA backbone. Located at the interface of the 30S and 50S subunits, it traverses the body of the 30S subunit contacting proteins on the other side and probably holding the rRNA structure together. The combined cluster of proteins S8, S12 and S17 appears to hold together the shoulder and platform of the 30S subunit. In Streptococcus pyogenes serotype M12 (strain MGAS2096), this protein is Small ribosomal subunit protein uS12.